A 1460-amino-acid chain; its full sequence is Centrosomal protein of 164 kDa (1460 aa).

Residues 1 to 194 are interaction with ATRIP; it reads MAGRPLRIGD…PSQGLKTSAY (194 aa). A WW domain is found at 56–89; that stretch reads APLPGEWKPCQDITGDIYYFNFANGQSMWDHPCD. The tract at residues 107–135 is disordered; it reads GAIKKKKKKKEKKDKKDRDPPKSSLALGS. The span at 109–119 shows a compositional bias: basic residues; it reads IKKKKKKKEKK. Ser-186 carries the phosphoserine; by ATR and ATM modification. Ser-201 is subject to Phosphoserine. 3 disordered regions span residues 213 to 412, 440 to 593, and 658 to 719; these read GLGE…HGLD, AQQP…AALK, and EEAR…QKNR. A compositionally biased stretch (acidic residues) spans 217 to 227; the sequence is ETNEEDEEESD. The span at 256 to 270 shows a compositional bias: basic and acidic residues; the sequence is ESLRTSQPEEKKDVS. Positions 285–296 are enriched in low complexity; that stretch reads SSPGADSSLSSA. 2 stretches are compositionally biased toward basic and acidic residues: residues 310–323 and 357–367; these read LPEK…EPKI and EGSRREEAAKE. The segment covering 453–464 has biased composition (low complexity); that stretch reads QSSQDELQSKQS. Basic and acidic residues predominate over residues 465-481; sequence KGLEERLSPPLPHEERA. A compositionally biased stretch (low complexity) spans 514–525; the sequence is SAASLSLQLSLQ. Positions 537–546 are enriched in basic and acidic residues; sequence EKGKEQHSQA. A Phosphoserine modification is found at Ser-566. Composition is skewed to basic and acidic residues over residues 658–668 and 686–719; these read EEARMREEESQ and DQIR…QKNR. Positions 1154-1206 form a coiled coil; that stretch reads GIKALEDMRKNLEKETRHLDEMKSAMRKGHNLLKKKEEKLNQLESSLWEEASD. Residues 1290 to 1310 are disordered; sequence PPPLLASMPAQLPPRDPKSTP. Residues Ser-1386, Ser-1388, and Ser-1443 each carry the phosphoserine modification.

Interacts (via N-terminus) with ATRIP. Interacts with ATM, ATR and MDC1. Interacts with XPA (via N-terminus) upon UV irradiation. Interacts with CEP83, CCDC92, TTBK2, DVL3, NPHP3 and weakly with NPHP4. Interacts with DZIP1. In terms of processing, phosphorylation at Ser-186 is induced upon DNA-damage caused by treatment with IR irradiation, UV irradiation, hydroxyurea or amphidicolin. Also MDC1-mediated chromatin remodeling is critical for DNA damage-induced phosphorylation. Expressed in several cell lines.

It localises to the cytoplasm. Its subcellular location is the cytoskeleton. The protein localises to the microtubule organizing center. It is found in the centrosome. The protein resides in the centriole. It localises to the nucleus. Functionally, plays a role in microtubule organization and/or maintenance for the formation of primary cilia (PC), a microtubule-based structure that protrudes from the surface of epithelial cells. Plays a critical role in G2/M checkpoint and nuclear divisions. A key player in the DNA damage-activated ATR/ATM signaling cascade since it is required for the proper phosphorylation of H2AX, RPA, CHEK2 and CHEK1. Plays a critical role in chromosome segregation, acting as a mediator required for the maintenance of genomic stability through modulation of MDC1, RPA and CHEK1. The sequence is that of Centrosomal protein of 164 kDa (CEP164) from Homo sapiens (Human).